A 415-amino-acid polypeptide reads, in one-letter code: Tumor necrosis factor receptor superfamily member 3 (415 aa).

The N-terminal stretch at 1 to 30 (MRLPRASSPCGLAWGPLLLGLSGLLVASQP) is a signal peptide. Residues 31-223 (QLVPPYRIEN…NPPEPGAMLL (193 aa)) lie on the Extracellular side of the membrane. Asparagine 40 is a glycosylation site (N-linked (GlcNAc...) asparagine). TNFR-Cys repeat units follow at residues 42–81 (TCWD…TVCK), 82–124 (TCPH…KAEC), 125–170 (RCQP…VNCV), and 171–213 (PCKP…TICK). Disulfide bonds link cysteine 43–cysteine 58, cysteine 59–cysteine 72, cysteine 62–cysteine 80, cysteine 83–cysteine 98, cysteine 101–cysteine 116, cysteine 104–cysteine 124, cysteine 126–cysteine 132, cysteine 139–cysteine 150, cysteine 142–cysteine 169, and cysteine 172–cysteine 187. N-linked (GlcNAc...) asparagine glycosylation occurs at asparagine 179. Residues 224 to 244 (LAILLSLVLFLLFTTVLACAW) traverse the membrane as a helical segment. Topologically, residues 245–415 (MRHPSLCRKL…ETETLGCQDL (171 aa)) are cytoplasmic. Residues 261–304 (HPEGEESPPCPAPRADPHFPDLAEPLLPMSGDLSPSPAGPPTAP) form a disordered region. Serine 315 is modified (phosphoserine). Residues 361-399 (LGGTRGPGDPPAPPEPPYPTPEEGAPGPSELSTPYQEDG) form a disordered region. Over residues 368-380 (GDPPAPPEPPYPT) the composition is skewed to pro residues.

Self-associates; dimerization and trimerization are promoted by lymphotoxin (LTA(3)). Associates with TRAF3. Associates with TRAF4. Associates with TRAF5.

It localises to the membrane. In terms of biological role, receptor for the heterotrimeric lymphotoxin containing LTA and LTB, and for TNFS14/LIGHT. Activates NF-kappa-B signaling upon stimulation with lymphotoxin. Promotes apoptosis via TRAF3 and TRAF5. May play a role in the development of lymphoid organs. Its function is as follows. (Microbial infection) Plays a role in host defense against Zika virus infection. The chain is Tumor necrosis factor receptor superfamily member 3 (Ltbr) from Mus musculus (Mouse).